A 135-amino-acid chain; its full sequence is Large ribosomal subunit protein uL16c (135 aa).

The protein belongs to the universal ribosomal protein uL16 family. Part of the 50S ribosomal subunit.

It is found in the plastid. Its subcellular location is the chloroplast. In Nandina domestica (Heavenly bamboo), this protein is Large ribosomal subunit protein uL16c.